A 291-amino-acid polypeptide reads, in one-letter code: MAVTLSLLLSGRVCAAVARCGFATRGVADPGPIGREPDPDSDWEPEERELQEVKSTLKRQKKAIRFQKIRRQMEASGAPPRTLTWEAMEQIRYLHEEFPESWSVPRLAEGFDVSTDVIRRVLKSKFLPTLEQKLKQDQKVLKKAGLAPLLQQLRGSGNTSKLLPAGHSVSGSLLMPGHEASSKDPNHSTALKVIESDTHRTNTPRRWKGRNKEIQDLEESFVPVAAPLGHPRELQKYSSDSESPRRTGNGALPSDQKLEELKAEEPGNFSSKVVQRGREFFDSNGNFLYRI.

Positions 1-15 are cleaved as a signal peptide; the sequence is MAVTLSLLLSGRVCA. A disordered region spans residues 27-49; sequence VADPGPIGREPDPDSDWEPEERE. Acidic residues predominate over residues 39-49; the sequence is PDSDWEPEERE. A Phosphoserine modification is found at Ser41. N-linked (GlcNAc...) asparagine glycosylation is present at Asn158. The interval 224-270 is disordered; it reads VAAPLGHPRELQKYSSDSESPRRTGNGALPSDQKLEELKAEEPGNFS. A compositionally biased stretch (basic and acidic residues) spans 256–265; sequence QKLEELKAEE.

It belongs to the neugrin family. Forms a regulatory protein-RNA complex, consisting of RCC1L, NGRN, RPUSD3, RPUSD4, TRUB2, FASTKD2 and 16S mt-rRNA. Interacts with 16S mt-rRNA; this interaction is direct.

The protein localises to the nucleus. Its subcellular location is the secreted. It is found in the mitochondrion membrane. Plays an essential role in mitochondrial ribosome biogenesis. As a component of a functional protein-RNA module, consisting of RCC1L, NGRN, RPUSD3, RPUSD4, TRUB2, FASTKD2 and 16S mitochondrial ribosomal RNA (16S mt-rRNA), controls 16S mt-rRNA abundance and is required for intra-mitochondrial translation of core subunits of the oxidative phosphorylation system. This is Neugrin (NGRN) from Pongo abelii (Sumatran orangutan).